The primary structure comprises 70 residues: uncharacterized protein (70 aa).

It is found in the plastid. The protein resides in the chloroplast. This is an uncharacterized protein from Mesostigma viride (Green alga).